Consider the following 147-residue polypeptide: Hemoglobin subunit delta (147 aa).

One can recognise a Globin domain in the interval 3–147; that stretch reads NLTAAEKTQV…VANALAHKYH (145 aa). Residues histidine 64 and histidine 93 each coordinate heme b.

The protein belongs to the globin family. In terms of assembly, heterotetramer of two delta chains and two alpha chains. Red blood cells.

In Elephas maximus (Indian elephant), this protein is Hemoglobin subunit delta (HBD).